The sequence spans 141 residues: Protein X (141 aa).

The segment covering 25–48 has biased composition (low complexity); that stretch reads SSGPSFPRPAAGSAASSASSPSPS. The tract at residues 25-52 is disordered; the sequence is SSGPSFPRPAAGSAASSASSPSPSDESD. Positions 68-113 are mitochondrial targeting sequence; it reads PCCLVFTCADLRTMDSTVNFVSWHANRQLGMPSKDLWTPYIKDQLL.

The protein belongs to the orthohepadnavirus protein X family. In terms of assembly, may form homodimer. May interact with host CEBPA, CFLAR, CREB1, DDB1, E4F1, HBXIP, HSPD1/HSP60, NFKBIA, POLR2E and SMAD4. Interacts with host SMC5-SMC6 complex and induces its degradation. Interacts with host TRPC4AP; leading to prevent ubiquitination of TRPC4AP. Interacts with host PLSCR1; this interaction promotes ubiquitination and degradation of HBx and impairs HBx-mediated cell proliferation. Post-translationally, a fraction may be phosphorylated in insect cells and HepG2 cells, a human hepatoblastoma cell line. Phosphorylated in vitro by host protein kinase C or mitogen-activated protein kinase. N-acetylated in insect cells.

Its subcellular location is the host cytoplasm. It is found in the host nucleus. It localises to the host mitochondrion. Multifunctional protein that plays a role in silencing host antiviral defenses and promoting viral transcription. Does not seem to be essential for HBV infection. May be directly involved in development of cirrhosis and liver cancer (hepatocellular carcinoma). Most of cytosolic activities involve modulation of cytosolic calcium. The effect on apoptosis is controversial depending on the cell types in which the studies have been conducted. May induce apoptosis by localizing in mitochondria and causing loss of mitochondrial membrane potential. May also modulate apoptosis by binding host CFLAR, a key regulator of the death-inducing signaling complex (DISC). Promotes viral transcription by using the host E3 ubiquitin ligase DDB1 to target the SMC5-SMC6 complex to proteasomal degradation. This host complex would otherwise bind to viral episomal DNA, and prevents its transcription. Moderately stimulates transcription of many different viral and cellular transcription elements. Promoters and enhancers stimulated by HBx contain DNA binding sites for NF-kappa-B, AP-1, AP-2, c-EBP, ATF/CREB, or the calcium-activated factor NF-AT. The protein is Protein X of Marmota monax (Woodchuck).